Here is a 378-residue protein sequence, read N- to C-terminus: MKIVADENIPLVNEFFGHLGEITRLPGRSMTAEDVRAADVLIVRSVTPVNAALLEGSRVRFVGTCTIGVDHLDQAWLEQQGIAWSSAPGCNANSVVEYVYAALCHLDIHWLHGRFGIIGCGNVGGLLYRRLKAQGVDVRCYDPNLTLAQNPDLTSLEDVLACDFISMHTPLVTTGSYPSFHLVGERELAQLRPGAILINAGRGAVVDNQALLDCLRVRHDVRVVLDVWEPEPDISLELLNEVAIGSPHIAGYSYDGKLNGTAMIYQACCKHIGVAPQADLSELVPPLDDNLLDTAGLTQPWPLAKHLIKQVYDIAADDARLREQAQLACAGNSEFGAGFDHLRKHYPRRREFHNYQVRLSAQAEAARHWLTVLGFRCV.

Substrate-binding residues include S45 and T66. NAD(+) contacts are provided by D142 and T169. The active site involves R202. D226 contacts NAD(+). The active site involves E231. H248 functions as the Proton donor in the catalytic mechanism. G251 lines the NAD(+) pocket. Position 252 (Y252) interacts with substrate.

This sequence belongs to the D-isomer specific 2-hydroxyacid dehydrogenase family. PdxB subfamily. In terms of assembly, homodimer.

The protein localises to the cytoplasm. The enzyme catalyses 4-phospho-D-erythronate + NAD(+) = (R)-3-hydroxy-2-oxo-4-phosphooxybutanoate + NADH + H(+). Its pathway is cofactor biosynthesis; pyridoxine 5'-phosphate biosynthesis; pyridoxine 5'-phosphate from D-erythrose 4-phosphate: step 2/5. Catalyzes the oxidation of erythronate-4-phosphate to 3-hydroxy-2-oxo-4-phosphonooxybutanoate. The chain is Erythronate-4-phosphate dehydrogenase from Cellvibrio japonicus (strain Ueda107) (Pseudomonas fluorescens subsp. cellulosa).